Here is a 370-residue protein sequence, read N- to C-terminus: Putative replication factor C small subunit L478 (370 aa).

Residue 41 to 48 participates in ATP binding; that stretch reads GPSGSGKK. Over residues 342–353 the composition is skewed to basic and acidic residues; the sequence is RNKEPEKSEKTK. Residues 342–370 are disordered; the sequence is RNKEPEKSEKTKSKTGKLSRTNSKKTIKN. Positions 354-370 are enriched in basic residues; the sequence is SKTGKLSRTNSKKTIKN.

This sequence belongs to the activator 1 small subunits family. RfcS subfamily.

Functionally, part of the RFC clamp loader complex which loads the PCNA sliding clamp onto DNA. This chain is Putative replication factor C small subunit L478, found in Acanthamoeba polyphaga (Amoeba).